Here is an 800-residue protein sequence, read N- to C-terminus: MGQKVHPSGFRVGITKKHQSQWFARFNKNKYSQTVLEDRMIRDTLNKLFPELLNPSTKGGSAPKRHQNARIKKSRITQIKIERNIVPYQIGIQIHAENCKLLKSSIKNLQVKKDILVKLQKTRQYLTNLKIKLDKLTNAPAETQVKTNFEDSTKRSVGQLELSHEGLNTKLSKIKSLRKKLAKLKTGTSTTRANTTGTRQKKLSSKTKRSISQLLKMKLLRAKLAKLVQPKLKRKALEASTIEKTTAKTLKTKKKVSLKRKNKFETKLTKRQLKRQRVFKKRLKLRKFIRLRDRLLISKGLFLQKKGHKITKKIVLAPTPKFLKDFSLNPKVYLLPVKRIEKLLTPKKAAKGGQKSAAVKTVRTSLQTNIYNSRIQKKFVTMYVEQMKKKFLPHLNELFLEYTSKGFDSNNKAVLSLGYMKQWDFERRVDNLKVQPIEKLDRLVHNLRDKFVMKLNLLRKDFITFGSFSSNSADILGLFQLYNFLMKLKNLVNGLKLNLKHKIKTRLAISKMNGSLNTSRNEPELRSRETSQASDKLRIVDSTNSSLPQKVFRKKLENISNEYRKMKFIEYLKDVVQKHRTDNIYLYLASISESRRKLKEIKNEVKQHLDLYLPGANSIKELNQKSSEDSINLATNEVNNVLMKLAKKHPFDRTFLDCKFEELERRKTMWVQNLQLVPKISIKFFSVNQKALNLKASIVSESVVDALEKRKAFRKVIKTTKENLMRNSEIKGVKIQVAGRLNGAEIARTEWVRAGRVPLQTLRANLDYSYRTANTIYGIIGVKVWIFKGFTKLVTESTGA.

The interval 1-118 (MGQKVHPSGF…LQVKKDILVK (118 aa)) is S3-like 1st part. Positions 119 to 664 (LQKTRQYLTN…FLDCKFEELE (546 aa)) are intervening sequence (IVS). The tract at residues 665-800 (RRKTMWVQNL…TKLVTESTGA (136 aa)) is S3-like 2nd part.

This sequence belongs to the universal ribosomal protein uS3 family. Part of the 30S ribosomal subunit.

Its subcellular location is the plastid. The protein localises to the chloroplast. This Chlamydomonas moewusii (Chlamydomonas eugametos) protein is Small ribosomal subunit protein uS3c (rps3).